The sequence spans 472 residues: UDP-glycosyltransferase 708G2 (472 aa).

His23 serves as the catalytic Proton acceptor. His23 provides a ligand contact to an anthocyanidin. Catalysis depends on Asp117, which acts as the Charge relay. Thr140 serves as a coordination point for UDP-alpha-D-glucose. The UDP stretch occupies residues 283-284 (SR). UDP-alpha-D-glucose is bound by residues Val346, Gln348, His363, Trp366, Asn367, Ser368, and Glu371. Gly386 is a binding site for an anthocyanidin. Positions 387 and 388 each coordinate UDP-alpha-D-glucose.

The protein belongs to the UDP-glycosyltransferase family. As to expression, expressed at low levels in leaves, flowers and immature leaves.

The enzyme catalyses a 3'-hydro-2'-hydroxy-beta-oxodihydrochalcone + UDP-alpha-D-glucose = a 3'-(beta-D-glucopyranosyl)-2'-hydroxy-beta-oxodihydrochalcone + UDP + H(+). Its function is as follows. UDP-glucose-dependent glucosyltransferase catalyzing the C-glucosylation of 2-hydroxyflavanones (2-hydroxylnaringenin and 2-hydroxypinocembrin) and phloretin. No activity with flavanones, flavones or flavonols. Exhibits C-glucosylation activity toward 2-phenyl-2',4',6'-trihydroxyacetophenone. Can use UDP-xylose as sugar donor, but catalytic efficiency is much lower toward UDP-xylose than toward UDP-glucose. The sequence is that of UDP-glycosyltransferase 708G2 (UGT708G2) from Citrus unshiu (Satsuma mandarin).